We begin with the raw amino-acid sequence, 1588 residues long: Paternally-expressed gene 3 protein (1588 aa).

The region spanning 46-128 is the SCAN box domain; that stretch reads HQRFRNLIYV…TLLENYKEMY (83 aa). 3 disordered regions span residues 128-230, 266-306, and 319-349; these read YQPE…ESYQ, DGHS…RRGI, and KFIK…MSDD. Over residues 129–142 the composition is skewed to acidic residues; it reads QPEDDNNSDVTSDD. 4 stretches are compositionally biased toward basic and acidic residues: residues 143 to 152, 161 to 182, 206 to 225, and 295 to 306; these read DMTRNRRESS, SGDR…DRWS, FEMD…RSQD, and PEAKKSTHRRGI. 3 consecutive C2H2-type zinc fingers follow at residues 454–476, 507–529, and 565–587; these read YVCD…QIMH, FECK…RKIH, and YECR…QKIH. The segment covering 588-607 has biased composition (basic and acidic residues); sequence FGDDKDNEREHERERERGET. The interval 588 to 610 is disordered; it reads FGDDKDNEREHERERERGETFRP. The C2H2-type 4 zinc-finger motif lies at 627 to 649; the sequence is YECKVCGETFLHSSSLKEHQKIH. Positions 838-930 are disordered; it reads LVASKPPRSH…EFSVPSSNVR (93 aa). The segment covering 868–881 has biased composition (basic and acidic residues); that stretch reads LNDKRQKIPARENP. The C2H2-type 5 zinc-finger motif lies at 969 to 991; it reads YECQECGECFAHSSDLTEHQKIH. The interval 1056–1104 is disordered; sequence EKSHGEESQGENTDGEETHSEETHGQETIEDPVIQGSDMEDPQKDDPDD. Residues 1071–1082 are compositionally biased toward basic and acidic residues; that stretch reads EETHSEETHGQE. 5 C2H2-type zinc fingers span residues 1107 to 1129, 1163 to 1185, 1225 to 1247, 1282 to 1304, and 1332 to 1354; these read YECE…QKVH, YECP…QRIH, IRCL…MRLH, FECA…VTVH, and YECK…KELH. Over residues 1395–1415 the composition is skewed to acidic residues; that stretch reads AEPEVEAAEPEVEAAEPEVEA. Residues 1395-1495 are disordered; it reads AEPEVEAAEP…GIEDPEEGED (101 aa). 7 consecutive repeat copies span residues 1397-1403, 1404-1410, 1411-1417, 1418-1422, 1425-1429, 1432-1436, and 1439-1443. Residues 1397–1417 form a 3 X 7 AA repeat of P-E-V-E-A-A-E region; sequence PEVEAAEPEVEAAEPEVEAAE. The segment at 1418-1443 is 4 X 5 AA repeat of P-X-G-E-A; it reads PNGEAEGPDGEAAEPIGEAGQPNGEA. 2 stretches are compositionally biased toward acidic residues: residues 1449 to 1466 and 1475 to 1495; these read DADE…ERAE and PEGD…EGED. 2 C2H2-type zinc fingers span residues 1505-1527 and 1564-1586; these read YDCH…LKTH and FKCD…QNTH.

This sequence belongs to the krueppel C2H2-type zinc-finger protein family. As to quaternary structure, homodimer. Interacts with SIAH1A and SIAH2. Interacts with TRAF2.

The protein resides in the nucleus. Its subcellular location is the cytoplasm. Its function is as follows. Induces apoptosis in cooperation with SIAH1A. Acts as a mediator between p53/TP53 and BAX in a neuronal death pathway that is activated by DNA damage. Acts synergistically with TRAF2 and inhibits TNF induced apoptosis through activation of NF-kappa-B. This is Paternally-expressed gene 3 protein (PEG3) from Pan troglodytes (Chimpanzee).